The chain runs to 226 residues: Charged multivesicular body protein 5 (226 aa).

Residues 21 to 93 (IAGVDARATN…NQSFNMEQAN (73 aa)) adopt a coiled-coil conformation. Over residues 188 to 198 (KAPEAPSREPG) the composition is skewed to basic and acidic residues. Residues 188 to 226 (KAPEAPSREPGADSIVPGKSTIETDEFGLPKIPTSLKTT) are disordered. Ser201 is modified (phosphoserine). Thr226 carries the post-translational modification Phosphothreonine.

Belongs to the SNF7 family. As to quaternary structure, probable peripherally associated component of the endosomal sorting required for transport complex III (ESCRT-III).

It localises to the endosome membrane. Its function is as follows. Probable peripherally associated component of the endosomal sorting required for transport complex III (ESCRT-III) which is involved in multivesicular bodies (MVBs) formation and sorting of endosomal cargo proteins into MVBs. MVBs contain intraluminal vesicles (ILVs) that are generated by invagination and scission from the limiting membrane of the endosome and are delivered to lysosomes enabling degradation of membrane proteins. Specifically down-regulates Notch signaling activity in the germarium, probably by facilitating Notch endocytosis. This chain is Charged multivesicular body protein 5, found in Drosophila melanogaster (Fruit fly).